Here is a 170-residue protein sequence, read N- to C-terminus: Flavin reductase (NADPH) (170 aa).

This sequence belongs to the non-flavoprotein flavin reductase family.

It catalyses the reaction reduced riboflavin + NADP(+) = riboflavin + NADPH + 2 H(+). Catalyzes the NADH-dependent reduction of FAD to provide FADH2 for the halogenase RebH. The sequence is that of Flavin reductase (NADPH) (rbmH) from Lentzea aerocolonigenes (Lechevalieria aerocolonigenes).